We begin with the raw amino-acid sequence, 326 residues long: Transposase InsH for insertion sequence element IS5A (326 aa).

It belongs to the transposase 11 family.

Involved in the transposition of the insertion sequence IS5. This is Transposase InsH for insertion sequence element IS5A (insH1) from Escherichia coli (strain K12).